The sequence spans 627 residues: Muscarinic acetylcholine receptor gar-2 (627 aa).

Topologically, residues 1–9 are extracellular; it reads MAVASVLLA. Residues 10 to 30 traverse the membrane as a helical segment; sequence LFMLFLSIVTVIGNLAVLLSY. The Cytoplasmic segment spans residues 31–41; sequence YLDKNIRQPTN. The chain crosses the membrane as a helical span at residues 42–62; the sequence is YFIFSLAISDLLIGLEGIPVY. The Extracellular segment spans residues 63–81; that stretch reads TAFYLNNNEWIWGDVLCDL. C79 and C160 are oxidised to a cystine. The helical transmembrane segment at 82-102 threads the bilayer; the sequence is WLSIDYIVCLASIYTVLGITV. Topologically, residues 103 to 122 are cytoplasmic; it reads DRYYSVKKPATYRNWRTPGR. Residues 123-143 form a helical membrane-spanning segment; sequence VVLIIIFIWLVPSILFSVSIF. Residues 144 to 172 lie on the Extracellular side of the membrane; the sequence is GYGTFTGTGRILKETECYVQFMTNPYLNM. The helical transmembrane segment at 173–193 threads the bilayer; sequence GMYISYYWTTLFVMLYLYWGI. Topologically, residues 194–549 are cytoplasmic; that stretch reads YRAAKKLALK…ENRARKALRT (356 aa). 3 disordered regions span residues 222-266, 423-442, and 449-475; these read VSVR…VGTP, REDE…ENGG, and ANDE…HDPN. The span at 231–264 shows a compositional bias: low complexity; the sequence is NSSSDSPNDTSNSSKCFRTAPPTTTVQTTQTNVG. Over residues 459–475 the composition is skewed to basic and acidic residues; that stretch reads KESEQKEEMTPENHDPN. Residues 550–570 form a helical membrane-spanning segment; sequence ITFILGSFIILWTPFYVLATI. Residues 571-586 are Extracellular-facing; sequence YGFCETCKASPSFNTL. Residues 587 to 609 traverse the membrane as a helical segment; the sequence is YTISYYLCYMNSPLNPFCYAMAN. Residues 610–627 are Cytoplasmic-facing; it reads QQFKKTLTRIFKGDFRRV.

The protein belongs to the G-protein coupled receptor 1 family. Muscarinic acetylcholine receptor subfamily. In terms of tissue distribution, expressed in putative sensory neurons, many cells of the ventral cord and in the HSN motor neurons. Expressed in some cholinergic motor neurons and GABAergic motor neurons, which are the two major types of ventral cord motor neurons.

It localises to the cell membrane. The protein resides in the cell projection. The protein localises to the axon. The muscarinic acetylcholine receptor mediates various cellular responses, including inhibition of adenylate cyclase, breakdown of phosphoinositides and modulation of potassium channels through the action of G proteins. Primary transducing effect is Pi turnover. Regulates the activity of ventral cord motor neurons. Couples to the G(o)-alpha G-protein subunit goa-1 to negatively regulate cholinergic receptor activity in the presence of high levels of the neurotransmitter acetylcholine in ventral cord motor neurons. As acetylcholine depolarizes body wall muscles, modulation of acetylcholine levels most likely results in the control locomotory behavior and egg-laying. This chain is Muscarinic acetylcholine receptor gar-2, found in Caenorhabditis elegans.